The sequence spans 73 residues: U3-agatoxin-Ao1i (73 aa).

Positions 1 to 20 (MRTIISLLLLSAMVFAEIEA) are cleaved as a signal peptide. Residues 21 to 34 (ISLEEGLQLFEGER) constitute a propeptide that is removed on maturation. 4 disulfide bridges follow: Cys36-Cys52, Cys43-Cys57, Cys51-Cys67, and Cys59-Cys65. Residue Ser71 is modified to Serine amide.

It belongs to the neurotoxin 07 (Beta/delta-agtx) family. 03 (aga-4) subfamily. Aga sub-subfamily. Expressed by the venom gland.

The protein localises to the secreted. Functionally, insecticidal neurotoxin that induces an irreversible spastic paralysis when injected into insects. Modifies presynaptic voltage-gated sodium channels (Nav), causing them to open at the normal resting potential of the nerve. This leads to spontaneous release of neurotransmitter and repetitive action potentials in motor neurons. The protein is U3-agatoxin-Ao1i of Agelena orientalis (Funnel-web spider).